The following is a 42-amino-acid chain: Protein YmiD (42 aa).

In Escherichia coli (strain K12), this protein is Protein YmiD.